A 113-amino-acid chain; its full sequence is Eukaryotic translation initiation factor 1b (113 aa).

N-acetylserine is present on S2. A Phosphoserine modification is found at S9.

Belongs to the SUI1 family.

Its function is as follows. Probably involved in translation. The chain is Eukaryotic translation initiation factor 1b (EIF1B) from Homo sapiens (Human).